A 444-amino-acid polypeptide reads, in one-letter code: Nuclear distribution protein PAC1 (444 aa).

A coiled-coil region spans residues 59–87; that stretch reads TAIARLQRRIMSLEQNIRDLREASIEMNA. 7 WD repeats span residues 113-152, 156-199, 204-251, 254-293, 307-347, 367-406, and 408-444; these read TLES…LPLA, AHTR…KLLR, HEHV…CLKS, PHSD…SVGL, SLQD…RLPQ, GHDS…KKWN, and IHQG…IFMQ.

The protein belongs to the WD repeat LIS1/nudF family. Self-associates. Interacts with NDL1 and dynein.

It localises to the cytoplasm. Its subcellular location is the cytoskeleton. The protein localises to the spindle pole. In terms of biological role, positively regulates the activity of the minus-end directed microtubule motor protein dynein. Plays a central role in positioning the mitotic spindle at the bud neck during cell division. Targets cytoplasmic dynein to microtubule plus ends, thereby promoting dynein-mediated microtubule sliding along the bud cortex and consequently the movement of the mitotic spindle to the bud neck. In Zygosaccharomyces rouxii (strain ATCC 2623 / CBS 732 / NBRC 1130 / NCYC 568 / NRRL Y-229), this protein is Nuclear distribution protein PAC1.